We begin with the raw amino-acid sequence, 388 residues long: Processive diacylglycerol beta-glucosyltransferase (388 aa).

The protein belongs to the glycosyltransferase 28 family. UgtP subfamily.

It is found in the cell membrane. It catalyses the reaction a 1,2-diacyl-3-O-(beta-D-glucopyranosyl)-sn-glycerol + UDP-alpha-D-glucose = a 1,2-diacyl-3-O-(beta-D-Glc-(1-&gt;6)-beta-D-Glc)-sn-glycerol + UDP + H(+). The enzyme catalyses a 1,2-diacyl-3-O-(beta-D-Glc-(1-&gt;6)-beta-D-Glc)-sn-glycerol + UDP-alpha-D-glucose = a 1,2-diacyl-3-O-(beta-D-Glc-(1-&gt;6)-beta-D-Glc-(1-&gt;6)-beta-D-Glc)-sn-glycerol + UDP + H(+). It carries out the reaction a 1,2-diacyl-sn-glycerol + UDP-alpha-D-glucose = a 1,2-diacyl-3-O-(beta-D-glucopyranosyl)-sn-glycerol + UDP + H(+). The protein operates within glycolipid metabolism; diglucosyl-diacylglycerol biosynthesis. Functionally, processive glucosyltransferase involved in the biosynthesis of both the bilayer- and non-bilayer-forming membrane glucolipids. Is able to successively transfer up to three glucosyl residues to diacylglycerol (DAG), thereby catalyzing the formation of beta-monoglucosyl-DAG (3-O-(beta-D-glucopyranosyl)-1,2-diacyl-sn-glycerol), beta-diglucosyl-DAG (3-O-(beta-D-glucopyranosyl-beta-(1-&gt;6)-D-glucopyranosyl)-1,2-diacyl-sn-glycerol) and beta-triglucosyl-DAG (3-O-(beta-D-glucopyranosyl-beta-(1-&gt;6)-D-glucopyranosyl-beta-(1-&gt;6)-D-glucopyranosyl)-1,2-diacyl-sn-glycerol). Beta-diglucosyl-DAG is the predominant glycolipid found in Bacillales and is also used as a membrane anchor for lipoteichoic acid (LTA). The polypeptide is Processive diacylglycerol beta-glucosyltransferase (Bacillus anthracis (strain A0248)).